The following is a 1162-amino-acid chain: MLEGRIVTVSSRTESPLAAPGVPGAPRRLSFARIREPLAVPGLLDIQTESFGWLIGAPDWCARAAARGTEPVAGLAEVLAEISPIEDFAGTMSLTLSDPRFEEVKASVEECKDKDLTYAAPWFVTAEFVNNNTGEIKSQTVFMGDFPMMTAHGTFVVNGTERVVVSQLVRSPGVYFDHAIDKGSEKDVHSARVIPSRGAWLEFDVDKRDTLGVRIDRKRRQPVTVLLKALGWSAERIAERFGFAPLIMASLAKDNVAGTDDALLEIHRKLRPGEPPTKESAQNLLANLFFTEKRYDLARVGRYKIDKKLGLRAPGAPRVLTEDDIAATIEYLVRLHAGERTMIAPGGVEVPVEVDDIDHFGNRRVRTVGELIQNQIRVGLSRMERVVRERMTTQDVEAITPQSLMNIRPVVAAMKEFFGTSQLSQFMDQRNPLASLTNKRRLSALGPGGLSRERAGLEVRDVHYSHYGRMCPIETPEGPNIGLMGYLSVYARVNPFGFVETPYRRVVDGRVTDEVDYLTADEEDRHVVAQANEPLDAEGRFLAARIPVRRKNSEVELVDSAAVDYMDVSPRQMVSVATAMIPFLEHDDANRALMGANMQRQAVPLIRSEAPIVGTGMELRAAVDAGDVVVNEKAGVVEEVSADYVTVMADDGTRKSYRMRKFNRSNQGTCSNQRPIVDEGQRVEAGQVLADGPCTENGEMALGKNLLVAIMPWEGHNYEDAIILSQRLVEQDVLTSIHIEEHEIDARDTKLGAEEITRDIPNVSDEVLADLDERGIVRIGAEVRDGDILVGKVTPKGETELTPEERLLRAIFGEKAREVRDTSLKVPHGESGKVIGIRVFSREDDDDLPPGVNELVRVYVAQKRKIQDGDKLAGRHGNKGVIGKILPTEDMPFLPDGTPVDIILNTHGVPRRMNIGQILETHLGWIGKAGWKVEGNPEWAKDLPEEMWEAPADSNIATPVFDGAREEELTGLLGSTLPNRDGERMVDDNGKAVLFDGRSGEPFPYPVAVGYMYILKLHHLVDDKIHARSTGPYSMITQQPLGGKAQFGGQRFGEMECWAMQAYGAAYTLQELLTIKSDDVVGRVKVYEAIVKGDNIPEPGVPESFKVLLKELQALCLNVEVLSAGAAVELAHGVDDDHERTAANLGINLSRAESITETELSG.

It belongs to the RNA polymerase beta chain family. In terms of assembly, the RNAP catalytic core consists of 2 alpha, 1 beta, 1 beta' and 1 omega subunit. When a sigma factor is associated with the core the holoenzyme is formed, which can initiate transcription.

It carries out the reaction RNA(n) + a ribonucleoside 5'-triphosphate = RNA(n+1) + diphosphate. Its function is as follows. DNA-dependent RNA polymerase catalyzes the transcription of DNA into RNA using the four ribonucleoside triphosphates as substrates. This Nocardia farcinica (strain IFM 10152) protein is DNA-directed RNA polymerase subunit beta 1.